Reading from the N-terminus, the 299-residue chain is Xyloglucan endotransglucosylase protein 6 (299 aa).

A signal peptide spans 1–25 (MASSLTLPMAMAFTLLALSFASAMG). A GH16 domain is found at 26–219 (GSMNSSRFDE…WSHAPFVASY (194 aa)). Glu-105 serves as the catalytic Nucleophile. Glu-109 functions as the Proton donor in the catalytic mechanism. Position 109 (Glu-109) interacts with xyloglucan. An N-linked (GlcNAc...) asparagine glycan is attached at Asn-113. Residues 122 to 124 (QTN), 132 to 134 (NRE), 198 to 199 (DW), and Gly-203 contribute to the xyloglucan site. 2 disulfide bridges follow: Cys-227-Cys-242 and Cys-281-Cys-294. Arg-286 is a xyloglucan binding site.

The protein belongs to the glycosyl hydrolase 16 family. XTH group 1 subfamily. Post-translationally, contains at least one intrachain disulfide bond essential for its enzymatic activity. In terms of tissue distribution, highest expression in ripe leaves after full expansion. Also expressed in fruits, and at a lower level in flowers and stems (picked at anthesis).

It localises to the secreted. It is found in the cell wall. The protein resides in the extracellular space. Its subcellular location is the apoplast. The catalysed reaction is breaks a beta-(1-&gt;4) bond in the backbone of a xyloglucan and transfers the xyloglucanyl segment on to O-4 of the non-reducing terminal glucose residue of an acceptor, which can be a xyloglucan or an oligosaccharide of xyloglucan.. Its function is as follows. Catalyzes xyloglucan endotransglycosylation (XET). Cleaves and religates xyloglucan polymers. Does not catalyze xyloglucan endohydrolysis (XEH). Probably involved in cell wall restructuring during postharvest fruit softening. The protein is Xyloglucan endotransglucosylase protein 6 of Diospyros kaki (Kaki persimmon).